The following is a 333-amino-acid chain: tRNA N6-adenosine threonylcarbamoyltransferase (333 aa).

Residues His111 and His115 each contribute to the Fe cation site. Substrate is bound by residues 134-138 (LVSGG), Asp167, Gly180, and Asn272. Asp300 provides a ligand contact to Fe cation.

The protein belongs to the KAE1 / TsaD family. Fe(2+) is required as a cofactor.

It is found in the cytoplasm. The catalysed reaction is L-threonylcarbamoyladenylate + adenosine(37) in tRNA = N(6)-L-threonylcarbamoyladenosine(37) in tRNA + AMP + H(+). Required for the formation of a threonylcarbamoyl group on adenosine at position 37 (t(6)A37) in tRNAs that read codons beginning with adenine. Is involved in the transfer of the threonylcarbamoyl moiety of threonylcarbamoyl-AMP (TC-AMP) to the N6 group of A37, together with TsaE and TsaB. TsaD likely plays a direct catalytic role in this reaction. This is tRNA N6-adenosine threonylcarbamoyltransferase from Legionella pneumophila (strain Paris).